A 109-amino-acid polypeptide reads, in one-letter code: Putative pterin-4-alpha-carbinolamine dehydratase (109 aa).

Belongs to the pterin-4-alpha-carbinolamine dehydratase family.

It catalyses the reaction (4aS,6R)-4a-hydroxy-L-erythro-5,6,7,8-tetrahydrobiopterin = (6R)-L-erythro-6,7-dihydrobiopterin + H2O. This chain is Putative pterin-4-alpha-carbinolamine dehydratase, found in Halorhodospira halophila (strain DSM 244 / SL1) (Ectothiorhodospira halophila (strain DSM 244 / SL1)).